A 277-amino-acid chain; its full sequence is 3-methyl-2-oxobutanoate hydroxymethyltransferase (277 aa).

D42 and D81 together coordinate Mg(2+). 3-methyl-2-oxobutanoate contacts are provided by residues 42–43, D81, and K110; that span reads DS. E112 is a binding site for Mg(2+). E179 serves as the catalytic Proton acceptor.

Belongs to the PanB family. In terms of assembly, homodecamer; pentamer of dimers. Mg(2+) is required as a cofactor.

Its subcellular location is the cytoplasm. It catalyses the reaction 3-methyl-2-oxobutanoate + (6R)-5,10-methylene-5,6,7,8-tetrahydrofolate + H2O = 2-dehydropantoate + (6S)-5,6,7,8-tetrahydrofolate. The protein operates within cofactor biosynthesis; (R)-pantothenate biosynthesis; (R)-pantoate from 3-methyl-2-oxobutanoate: step 1/2. Functionally, catalyzes the reversible reaction in which hydroxymethyl group from 5,10-methylenetetrahydrofolate is transferred onto alpha-ketoisovalerate to form ketopantoate. The chain is 3-methyl-2-oxobutanoate hydroxymethyltransferase from Anaplasma marginale (strain St. Maries).